Consider the following 92-residue polypeptide: DNA-directed RNA polymerase subunit Rpo11 (92 aa).

Belongs to the archaeal Rpo11/eukaryotic RPB11/RPC19 RNA polymerase subunit family. As to quaternary structure, part of the RNA polymerase complex.

The protein localises to the cytoplasm. The enzyme catalyses RNA(n) + a ribonucleoside 5'-triphosphate = RNA(n+1) + diphosphate. Its function is as follows. DNA-dependent RNA polymerase (RNAP) catalyzes the transcription of DNA into RNA using the four ribonucleoside triphosphates as substrates. This Methanosarcina barkeri (strain Fusaro / DSM 804) protein is DNA-directed RNA polymerase subunit Rpo11.